The sequence spans 5762 residues: Mucin-5B (5762 aa).

A signal peptide spans 1–25; sequence MGAPSACRTLVLALAAMLVVPQAET. Positions 27–50 are disordered; it reads GPVEPSWENAGHTMDGGAPTSSPT. Positions 75-245 constitute a VWFD 1 domain; sequence RVCSTWGDFH…KLDGPTEQCP (171 aa). 2 cysteine pairs are disulfide-bonded: Cys77/Cys207 and Cys99/Cys244. Asn145 carries an N-linked (GlcNAc...) asparagine glycan. Glu194 is a binding site for Cu(2+). N-linked (GlcNAc...) asparagine glycosylation is found at Asn201 and Asn254. Positions 311 and 358 each coordinate Cu(2+). The TIL 1 domain maps to 329–385; that stretch reads CPLNMQHQECGSPCTDTCSNPQRAQLCEDHCVDGCFCPPGTVLDDITHSGCLPLGQC. The N-linked (GlcNAc...) asparagine glycan is linked to Asn401. The region spanning 423 to 598 is the VWFD 2 domain; the sequence is GTCSVQGGAH…NTWKAQAACA (176 aa). Intrachain disulfides connect Cys425–Cys562, Cys447–Cys597, and Cys469–Cys477. The N-linked (GlcNAc...) asparagine glycan is linked to Asn515. TIL domains lie at 695–752 and 805–855; these read CPKS…AQEC and NSSA…EEDC. A glycan (N-linked (GlcNAc...) asparagine) is linked at Asn805. Positions 855 to 927 constitute a VWFC 1 domain; sequence CPCVHNEATY…EYILAQDYCG (73 aa). The 170-residue stretch at 893-1062 folds into the VWFD 3 domain; sequence GTCVAYGDGH…NSWKLSPSCP (170 aa). 4 disulfide bridges follow: Cys895–Cys1026, Cys917–Cys1061, Cys926–Cys1023, and Cys944–Cys951. N-linked (GlcNAc...) asparagine glycosylation is present at Asn929. Residues Asn1276 and Asn1292 are each glycosylated (N-linked (GlcNAc...) asparagine). A Cys-rich subdomain 1 repeat occupies 1333 to 1432; that stretch reads CVREVCRWSS…RVLCCEYVPC (100 aa). The 7 X Cys-rich subdomain repeats stretch occupies residues 1333 to 4228; it reads CVREVCRWSS…RVFCCNYGHC (2896 aa). A C-linked (Man) tryptophan glycan is attached at Trp1340. Disordered stretches follow at residues 1437–1462 and 1480–1502; these read APGTSPQPSLSASTEPAVPTPTQTTA and LTSQTGSSSGPVTVTPSAPGTTT. Residues 1450-1462 show a composition bias toward low complexity; that stretch reads TEPAVPTPTQTTA. One copy of the Cys-rich subdomain 2 repeat lies at 1503-1604; that stretch reads CQPRCQWTEW…VLCCSDDHCR (102 aa). C-linked (Man) tryptophan glycosylation is present at Trp1509. N-linked (GlcNAc...) asparagine glycosylation is present at Asn1556. A disordered region spans residues 1607 to 1783; the sequence is ATTPPPTTEL…NTTTSQGTTR (177 aa). The segment covering 1614 to 1624 has biased composition (low complexity); the sequence is TELETATTTTT. Composition is skewed to polar residues over residues 1625 to 1638 and 1645 to 1662; these read QALFSTPQPTSSPG and ASTTAVPTLSEGLTSPRY. The span at 1663-1684 shows a compositional bias: low complexity; sequence TSTLGTATTGGPTTPAGSTEPT. Residues 1689–1706 are compositionally biased toward polar residues; sequence ATSTLPTRSALPGTTGSL. Low complexity-rich tracts occupy residues 1739 to 1756 and 1765 to 1777; these read EPLTTSLAPTLTSELSTS and TETTMSPLTNTTT. Asn1774 carries N-linked (GlcNAc...) asparagine glycosylation. The Cys-rich subdomain 3 repeat unit spans residues 1784–1885; sequence CQPKCEWTEW…VLCCDDYSHC (102 aa). C-linked (Man) tryptophan glycosylation occurs at Trp1790. The segment covering 1890–1987 has biased composition (low complexity); sequence ATSSTATPSS…TSVTPIPSSS (98 aa). Disordered regions lie at residues 1890 to 2019, 2031 to 2100, 2114 to 2211, and 2242 to 2302; these read ATSS…TAHT, GATG…GTTH, TGSM…HTVR, and TGTT…SSPT. Residues 1890–2199 are 11 X approximate tandem repeats, Ser/Thr-rich; that stretch reads ATSSTATPSS…VPNTMATTHG (310 aa). The span at 1988 to 1997 shows a compositional bias: polar residues; sequence LGTTWTRLSQ. Residues 1998–2019 show a composition bias toward low complexity; it reads TTTPTATMSTATPSSTPETAHT. Residues 2114 to 2181 show a composition bias toward low complexity; the sequence is TGSMATPSSS…TSNTVTPSSA (68 aa). Positions 2182–2199 are enriched in polar residues; sequence LGTTHTPPVPNTMATTHG. Residues 2313-2414 form a Cys-rich subdomain 4 repeat; that stretch reads GCEPQCAWSE…RVFCCNYGHC (102 aa). C-linked (Man) tryptophan glycosylation is present at Trp2320. Residues 2419–2756 form an 11 X approximate tandem repeats, Ser/Thr-rich region; that stretch reads ATSSTAMPSS…VPNTTATTHG (338 aa). Disordered regions lie at residues 2443–2462, 2473–2522, and 2556–2861; these read ATTTESTGSTATPSSTPGTT, TVTV…ATAL, and TTPT…PTSA. A compositionally biased stretch (low complexity) spans 2556 to 2738; the sequence is TTPTATMSTA…TSSTVTPSSA (183 aa). Polar residues predominate over residues 2739–2786; sequence LGTTHTPPVPNTTATTHGRSLSPSSPHTVRTAWTSATSGTLGTTHITE. N-linked (GlcNAc...) asparagine glycosylation is present at Asn2749. Residues 2787–2861 are compositionally biased toward low complexity; sequence PSTGTSHTPA…TLLPSSPTSA (75 aa). Residues 2854–2886 form an HAT 1 repeat; it reads LPSSPTSAPITTVVTMGCEPQCAWSEWLDYSYP. Residues 2871 to 2971 form a Cys-rich subdomain 5 repeat; that stretch reads CEPQCAWSEW…RVFCCNYGHC (101 aa). C-linked (Man) tryptophan glycosylation is present at Trp2877. Positions 2976 to 3456 are 17 X approximate tandem repeats, Ser/Thr-rich; it reads ATSSTATPSS…VPNTTATTHG (481 aa). Low complexity-rich tracts occupy residues 3001–3017 and 3026–3049; these read TTTATTGSTAIPSSTPG and TSTATTPTATSSKATSSSSPRTAT. 4 disordered regions span residues 3001 to 3049, 3256 to 3357, 3371 to 3469, and 3481 to 3561; these read TTTA…RTAT, TTPT…GTTH, TGSM…TVRT, and TTHI…PTSA. The segment covering 3371 to 3438 has biased composition (low complexity); it reads TGSMATPSSS…TSSTVTPSSA (68 aa). Positions 3439–3456 are enriched in polar residues; the sequence is LGTTHTPPVPNTTATTHG. Asn3449 is a glycosylation site (N-linked (GlcNAc...) asparagine). Positions 3487-3561 are enriched in low complexity; that stretch reads PSTVTSHTPA…TLLPSSPTSA (75 aa). An HAT 2 repeat occupies 3554-3586; that stretch reads LPSSPTSAPITTVVTTGCEPQCAWSEWLDYSYP. The Cys-rich subdomain 6 repeat unit spans residues 3571-3671; that stretch reads CEPQCAWSEW…RVFCCNYGHC (101 aa). A glycan (C-linked (Man) tryptophan) is linked at Trp3577. The tract at residues 3676–4013 is 11 X approximate tandem repeats, Ser/Thr-rich; it reads ATSSTATPSS…VPNTTATTHG (338 aa). Disordered regions lie at residues 3699–3779, 3813–3917, and 3956–4118; these read TATT…ATAL, TTPT…HTPT, and ATGS…PTSA. The span at 3956–3995 shows a compositional bias: low complexity; it reads ATGSTTNPSSTPGTTPIPPVLTTTATTPAATSSTVTPSSA. Residues 3996–4043 are compositionally biased toward polar residues; sequence LGTTHTPPVPNTTATTHGRSLSPSSPHTVRTAWTSATSGTLGTTHITE. Asn4006 carries an N-linked (GlcNAc...) asparagine glycan. A compositionally biased stretch (low complexity) spans 4044-4118; that stretch reads PSTGTSHTPA…TLLPSSPTSA (75 aa). Residues 4111–4143 form an HAT 3 repeat; sequence LPSSPTSAPITTVVTTGCEPQCAWSEWLDYSYP. One copy of the Cys-rich subdomain 7 repeat lies at 4128-4228; the sequence is CEPQCAWSEW…RVFCCNYGHC (101 aa). Trp4134 is a glycosylation site (C-linked (Man) tryptophan). The 23 X approximate tandem repeats, Ser/Thr-rich stretch occupies residues 4233–4879; it reads ATSSTAMPSS…TLGTAHTPKV (647 aa). 2 stretches are compositionally biased toward low complexity: residues 4259 to 4274 and 4283 to 4389; these read TTASTGSTATPSSTPG and TSPA…PGTT. Disordered stretches follow at residues 4259–4389, 4428–4447, 4458–4527, and 4541–4750; these read TTAS…PGTT, ATTTASTGSTATPSSTPGTT, TVTV…AIPS, and TTPT…ATSF. Residues Asn4804, Asn4960, Asn5017, Asn5024, Asn5046, Asn5096, and Asn5111 are each glycosylated (N-linked (GlcNAc...) asparagine). In terms of domain architecture, VWFD 4 spans 5073–5261; that stretch reads CICSMWGGSH…VPDSRKDGCW (189 aa). 3 disulfides stabilise this stretch: Cys5075/Cys5221, Cys5097/Cys5260, and Cys5121/Cys5132. An N-linked (GlcNAc...) asparagine glycan is attached at Asn5215. The 73-residue stretch at 5412–5484 folds into the VWFC 2 domain; sequence CPCVGPDGFP…NPCCPETVCV (73 aa). N-linked (GlcNAc...) asparagine glycans are attached at residues Asn5486, Asn5526, Asn5565, Asn5566, Asn5602, Asn5612, Asn5663, Asn5677, and Asn5721. Positions 5521-5587 constitute a VWFC 3 domain; it reads QLCSYNGTFY…VAGQCCGECV (67 aa). Disulfide bonds link Cys5653–Cys5705, Cys5672–Cys5719, Cys5681–Cys5735, and Cys5685–Cys5737. Residues 5653 to 5742 form the CTCK domain; that stretch reads CEEDSCQVRI…DECGCTPFCV (90 aa).

Homomultimer; disulfide-linked. The N- and C-terminus mediate their assembly into higher order structures to form filaments. The CTCK domains of two polypeptides associate in the endoplasmic reticulum to generate intermolecularly disulfide-bonded dimers. These dimers progress to the Golgi apparatus, which is a more acidic environment than the endoplasmic reticulum. Under acidic conditions, the N-termini form non-covalent intermolecular interactions that juxtapose assemblies from different CTCK-linked dimers to produce long, disulfide-linked polymers that remain highly compact until secretion. In terms of processing, highly glycosylated. C-, N- and O-glycosylated. C-mannosylated in the Cys-rich subdomains probably on the first Trp residue of the WXXW motif. Highly O-glycosylated in the Ser/Thr-rich tandem repeat (TR) region. The repeat region is about 59% O-glycosylated with a high abundance of NeuAc(2)Hex(1)HexNac1-ol. As to expression, expressed on surface airway epithelia. Expressed mainly in mucous cells of submucosal glands of airway tissues. Highly expressed in the sublingual gland. Also found in submaxillary glands, endocervix, gall bladder, and pancreas.

It localises to the secreted. In terms of biological role, gel-forming mucin that is thought to contribute to the lubricating and viscoelastic properties of whole saliva and cervical mucus. The chain is Mucin-5B (MUC5B) from Homo sapiens (Human).